A 275-amino-acid polypeptide reads, in one-letter code: Large ribosomal subunit protein uL2 (275 aa).

The span at 28–38 (RPYDGLLEKKS) shows a compositional bias: basic and acidic residues. 2 disordered regions span residues 28-58 (RPYD…GGGH) and 223-275 (VAMN…RKAK). The span at 254 to 275 (KGHKTRKNKRTDKLIVRRRKAK) shows a compositional bias: basic residues.

This sequence belongs to the universal ribosomal protein uL2 family. As to quaternary structure, part of the 50S ribosomal subunit. Forms a bridge to the 30S subunit in the 70S ribosome.

One of the primary rRNA binding proteins. Required for association of the 30S and 50S subunits to form the 70S ribosome, for tRNA binding and peptide bond formation. It has been suggested to have peptidyltransferase activity; this is somewhat controversial. Makes several contacts with the 16S rRNA in the 70S ribosome. In Chromohalobacter salexigens (strain ATCC BAA-138 / DSM 3043 / CIP 106854 / NCIMB 13768 / 1H11), this protein is Large ribosomal subunit protein uL2.